A 250-amino-acid polypeptide reads, in one-letter code: MERRLVNSTSQSKTESAQQDAGKAVVLLSGGLDSATCVAIARDQGFEVHAISFRYGQRHDGELDRAAKQASLMGVVSHRVIDIDLAQLGGSALVDSSIAVPKSDHVDKIAGDIPVTYVPARNTIFLSYALAVAETLGSRDIFIGVNALDYSGYPDCRPEFIDAFQTMARLATKAGVEDEHSLTIHTPLLHWTKAEIIQRGIELGVDYSQTLSCYDPQGSSDEMRPCGQCDACLLRAKGFAENEIADPAIG.

28 to 38 (LSGGLDSATCV) contacts ATP. Residues Cys-213, Cys-226, Cys-229, and Cys-232 each contribute to the Zn(2+) site.

It belongs to the QueC family. Zn(2+) is required as a cofactor.

The enzyme catalyses 7-carboxy-7-deazaguanine + NH4(+) + ATP = 7-cyano-7-deazaguanine + ADP + phosphate + H2O + H(+). The protein operates within purine metabolism; 7-cyano-7-deazaguanine biosynthesis. Functionally, catalyzes the ATP-dependent conversion of 7-carboxy-7-deazaguanine (CDG) to 7-cyano-7-deazaguanine (preQ(0)). In Rhodopirellula baltica (strain DSM 10527 / NCIMB 13988 / SH1), this protein is 7-cyano-7-deazaguanine synthase.